Consider the following 94-residue polypeptide: MLKPLGNRVIIKRVESEQTTKSGIVLTEKAKEKSNEGKVIAVGPGRLLDNGERVTPEVKEGDTVVFEQYAGSEVQVGEDKYLVISEEEVLAIVQ.

This sequence belongs to the GroES chaperonin family. As to quaternary structure, heptamer of 7 subunits arranged in a ring. Interacts with the chaperonin GroEL.

The protein localises to the cytoplasm. Functionally, together with the chaperonin GroEL, plays an essential role in assisting protein folding. The GroEL-GroES system forms a nano-cage that allows encapsulation of the non-native substrate proteins and provides a physical environment optimized to promote and accelerate protein folding. GroES binds to the apical surface of the GroEL ring, thereby capping the opening of the GroEL channel. The protein is Co-chaperonin GroES of Staphylococcus carnosus (strain TM300).